The sequence spans 309 residues: MARKKISIIGAGNVGATAAHWAASKELGDIVLLDIMEGIPQGKGLDLMEASPVEGFDCHIIGTNSYADTANSDVVVITAGIARKPGMSRDDLITTNTKIVADCAKKAAEQSPDSIIIIVSNPLDAMTYVAQKASGFPTNRVFGMSGILDAARFKTFIAMEMGCSVKDVSTILLGGHGDDMVPLPSYTFIGGIPIRQLLPEEKIQAMVDRARKGGAEIVAYLKTGSAYYAPSASVIQMVEAILKDQKRILPVAAYLNGEYGYEGIYTSVPVMLGANGVEKVFEIELTAEERQLFAKSVDSVKNLIAVTGM.

NAD(+) is bound by residues G10 to G15 and D34. Positions 83 and 89 each coordinate substrate. NAD(+)-binding positions include N96 and V119–N121. Residues N121 and R152 each contribute to the substrate site. The Proton acceptor role is filled by H176.

It belongs to the LDH/MDH superfamily. MDH type 3 family.

It carries out the reaction (S)-malate + NAD(+) = oxaloacetate + NADH + H(+). In terms of biological role, catalyzes the reversible oxidation of malate to oxaloacetate. This chain is Malate dehydrogenase, found in Heliobacterium modesticaldum (strain ATCC 51547 / Ice1).